A 325-amino-acid polypeptide reads, in one-letter code: Diacylglycerol acyltransferase/mycolyltransferase Ag85B (325 aa).

Positions 1–40 (MTDVSRKIRAWGRRLMIGTAAAVVLPGLVGLAGGAATAGA) are cleaved as a signal peptide. A substrate-binding site is contributed by 82 to 83 (LR). A fibronectin-binding region spans residues 98–108 (FEWYYQSGLSI). Cys127 and Cys132 are oxidised to a cystine. Residues Ser166 and Asp194 each contribute to the substrate site. Ser166 (nucleophile) is an active-site residue. Glu270 is an active-site residue. Residues 272 to 275 (FVRS), Lys279, and 302 to 304 (HSW) contribute to the substrate site. Residue His302 is part of the active site.

The protein belongs to the mycobacterial A85 antigen family.

Its subcellular location is the secreted. The catalysed reaction is 2 alpha,alpha'-trehalose 6-mycolate = alpha,alpha'-trehalose 6,6'-bismycolate + alpha,alpha-trehalose. It carries out the reaction an acyl-CoA + a 1,2-diacyl-sn-glycerol = a triacyl-sn-glycerol + CoA. Its function is as follows. The antigen 85 proteins (FbpA, FbpB, FbpC) are responsible for the high affinity of mycobacteria for fibronectin, a large adhesive glycoprotein, which facilitates the attachment of M.tuberculosis to murine alveolar macrophages (AMs). They also help to maintain the integrity of the cell wall by catalyzing the transfer of mycolic acids to cell wall arabinogalactan and through the synthesis of alpha,alpha-trehalose dimycolate (TDM, cord factor). They catalyze the transfer of a mycoloyl residue from one molecule of alpha,alpha-trehalose monomycolate (TMM) to another TMM, leading to the formation of TDM. The protein is Diacylglycerol acyltransferase/mycolyltransferase Ag85B (fbpB) of Mycobacterium tuberculosis (strain ATCC 25177 / H37Ra).